A 1288-amino-acid chain; its full sequence is Vacuolating cytotoxin autotransporter (1288 aa).

The N-terminal stretch at 1-33 is a signal peptide; the sequence is MEIQQTHRKINRPLVSLVLAGALISAIPQESHA. Residues 326 to 377 are disordered; it reads PPEGGYKDKPNSTTSQSGTKNDKKEISQNNNSNTEVINPPNNTQKTETEPTQ. Residues 352–376 are compositionally biased toward polar residues; sequence SQNNNSNTEVINPPNNTQKTETEPT. The Autotransporter domain occupies 1015–1288; that stretch reads KYEKPTNVWA…ASNLGMRYSF (274 aa).

The protein localises to the periplasm. It localises to the secreted. It is found in the cell surface. The protein resides in the cell outer membrane. Induces vacuolation of eukaryotic cells. Causes ulceration and gastric lesions. The protein is Vacuolating cytotoxin autotransporter (vacA) of Helicobacter pylori (strain J99 / ATCC 700824) (Campylobacter pylori J99).